A 311-amino-acid chain; its full sequence is MVLNWRFALSADEQRLVREIISAATEFDEVSPVGEQVLRELGYDRTEHLLVTDSRPYAPIIGYLNLSSPRDAGVAMAELVVHPRERRRGVGAAMVRAALAKTGGRNRFWAHGTLASARATASVLGLVPVRELVQMQRSLRTIPDPMVPDQLGVWVRTYVGTVDDAELLRVNNAAFAGHPEQGGWTATQLAERRSEPWFDPAGLFLAFGDSSSNQPGKLLGFHWTKVHAAHPGLGEVYVLGVDPSAQGRGLGQMLTSIGIASLAQRLVGPSAEPTVMLYVESDNVAAARTYERLGFTTYSVDTAYALARIDD.

E35 provides a ligand contact to 1D-myo-inositol 2-(L-cysteinylamino)-2-deoxy-alpha-D-glucopyranoside. 79-81 is an acetyl-CoA binding site; it reads LVV. Positions 155 to 311 constitute an N-acetyltransferase domain; the sequence is VRTYVGTVDD…TAYALARIDD (157 aa). Positions 180, 225, and 235 each coordinate 1D-myo-inositol 2-(L-cysteinylamino)-2-deoxy-alpha-D-glucopyranoside. Residues 239–241 and 246–252 each bind acetyl-CoA; these read LGV and QGRGLGQ. Y278 is a binding site for 1D-myo-inositol 2-(L-cysteinylamino)-2-deoxy-alpha-D-glucopyranoside. 283–288 contributes to the acetyl-CoA binding site; that stretch reads NVAAAR.

It belongs to the acetyltransferase family. MshD subfamily. Monomer.

The enzyme catalyses 1D-myo-inositol 2-(L-cysteinylamino)-2-deoxy-alpha-D-glucopyranoside + acetyl-CoA = mycothiol + CoA + H(+). Its function is as follows. Catalyzes the transfer of acetyl from acetyl-CoA to desacetylmycothiol (Cys-GlcN-Ins) to form mycothiol. In Mycobacterium leprae (strain Br4923), this protein is Mycothiol acetyltransferase.